A 147-amino-acid chain; its full sequence is UPF0251 protein CTC_01373 (147 aa).

It belongs to the UPF0251 family.

This Clostridium tetani (strain Massachusetts / E88) protein is UPF0251 protein CTC_01373.